Here is a 269-residue protein sequence, read N- to C-terminus: Phosphonates import ATP-binding protein PhnC (269 aa).

Residues 2 to 245 enclose the ABC transporter domain; sequence LVVEGLTCRF…VARELYDLEA (244 aa). Residue 34-41 coordinates ATP; that stretch reads GRSGAGKS.

The protein belongs to the ABC transporter superfamily. Phosphonates importer (TC 3.A.1.9.1) family. As to quaternary structure, the complex is composed of two ATP-binding proteins (PhnC), two transmembrane proteins (PhnE) and a solute-binding protein (PhnD).

The protein localises to the cell inner membrane. The enzyme catalyses phosphonate(out) + ATP + H2O = phosphonate(in) + ADP + phosphate + H(+). Functionally, part of the ABC transporter complex PhnCDE involved in phosphonates import. Responsible for energy coupling to the transport system. The protein is Phosphonates import ATP-binding protein PhnC of Bradyrhizobium diazoefficiens (strain JCM 10833 / BCRC 13528 / IAM 13628 / NBRC 14792 / USDA 110).